The following is a 480-amino-acid chain: MNFETVIGLEVHVELNTNSKIFSPSSAHFGQEQNANTNVIDWSFPGVLPVMNKGVIDAGIKAALALNMDIHQNMHFDRKNYFYPDNPKAYQISQFDEPIGYNGWIEIELEDGTRKKIRIERAHLEEDAGKNTHGTDGYSYVDLNRQGVPLIEIVSEADMRSPEEAYAYLTALKEIIQYTGISDVKMEEGSMRVDANISLRPYGQEEFGTKAELKNLNSFNNVRKGLIHEEKRQAQVLRSGGQIQQETRRFDETTGETILMRVKEGSSDYRYFPEPDLPLFDISDEWIDQVRLELPEFPQERRAKYVSSFGLSSYDASQLTATKATSDFFEKAVAIGGDAKQVSNWLQGEVAQFLNSESKSIEEIGLTPENLVEMIGLIADGTISSKIAKKVFVHLAKNGGSAEEFVKKAGLVQISDPEVLIPIIHQVFADNEAAVIDFKSGKRNADKAFTGYLMKATKGQANPQVALKLLAQELAKLKEE.

Belongs to the GatB/GatE family. GatB subfamily. As to quaternary structure, heterotrimer of A, B and C subunits.

The enzyme catalyses L-glutamyl-tRNA(Gln) + L-glutamine + ATP + H2O = L-glutaminyl-tRNA(Gln) + L-glutamate + ADP + phosphate + H(+). It catalyses the reaction L-aspartyl-tRNA(Asn) + L-glutamine + ATP + H2O = L-asparaginyl-tRNA(Asn) + L-glutamate + ADP + phosphate + 2 H(+). Allows the formation of correctly charged Asn-tRNA(Asn) or Gln-tRNA(Gln) through the transamidation of misacylated Asp-tRNA(Asn) or Glu-tRNA(Gln) in organisms which lack either or both of asparaginyl-tRNA or glutaminyl-tRNA synthetases. The reaction takes place in the presence of glutamine and ATP through an activated phospho-Asp-tRNA(Asn) or phospho-Glu-tRNA(Gln). This chain is Aspartyl/glutamyl-tRNA(Asn/Gln) amidotransferase subunit B, found in Streptococcus agalactiae serotype Ia (strain ATCC 27591 / A909 / CDC SS700).